Here is a 265-residue protein sequence, read N- to C-terminus: uncharacterized protein (265 aa).

Disordered stretches follow at residues 21 to 53 (TLTHDEQGPGVEPGPCSRGSSIDGLLPSLLGPH) and 78 to 133 (HAPS…SSVS). A compositionally biased stretch (acidic residues) spans 90-101 (DDDDDDEDDDDS). A compositionally biased stretch (low complexity) spans 114 to 123 (SSSSSSSPRV). Position 137 to 144 (137 to 144 (AILHQGKS)) interacts with ATP.

This is an uncharacterized protein from Saccharomyces cerevisiae (strain ATCC 204508 / S288c) (Baker's yeast).